The sequence spans 599 residues: Beta-myrcene synthase, chloroplastic (599 aa).

The N-terminal 34 residues, Met1–Val34, are a transit peptide targeting the chloroplast. Mg(2+)-binding residues include Asp352, Asp356, Asp496, Thr500, and Glu504. The DDXXD motif motif lies at Asp352–Asp356.

This sequence belongs to the terpene synthase family. Mg(2+) serves as cofactor. It depends on Mn(2+) as a cofactor.

The protein localises to the plastid. It is found in the chloroplast. It carries out the reaction (2E)-geranyl diphosphate = beta-myrcene + diphosphate. The protein operates within secondary metabolite biosynthesis; terpenoid biosynthesis. In terms of biological role, monoterpene synthase that catalyzes the formation of beta-myrcene from geranyl diphosphate. The chain is Beta-myrcene synthase, chloroplastic (MYS) from Ocimum basilicum (Sweet basil).